The sequence spans 1436 residues: DNA polymerase III PolC-type (1436 aa).

An Exonuclease domain is found at 420 to 576 (YVVFDVETTG…YDTEATAYIF (157 aa)).

It belongs to the DNA polymerase type-C family. PolC subfamily.

Its subcellular location is the cytoplasm. It carries out the reaction DNA(n) + a 2'-deoxyribonucleoside 5'-triphosphate = DNA(n+1) + diphosphate. Its function is as follows. Required for replicative DNA synthesis. This DNA polymerase also exhibits 3' to 5' exonuclease activity. The chain is DNA polymerase III PolC-type from Staphylococcus aureus (strain MW2).